A 500-amino-acid chain; its full sequence is Organic cation/carnitine transporter 7 (500 aa).

The Cytoplasmic portion of the chain corresponds to 1–23 (MADGNTRFTVDEALVAMGFGKFQ). A helical membrane pass occupies residues 24 to 44 (IYVLAYAGMGWVAEAMEMMLL). Over 45-62 (SFVGPAVQSLWNLSARQE) the chain is Extracellular. An N-linked (GlcNAc...) asparagine glycan is attached at asparagine 56. Residues 63 to 83 (SLITSVVFAGMLIGAYSWGIV) traverse the membrane as a helical segment. The Cytoplasmic segment spans residues 84-97 (SDKHGRRKGFIITA). A helical membrane pass occupies residues 98 to 118 (VVTFVAGFLSAFSPNYMWLII). Over 119-120 (LR) the chain is Extracellular. A helical transmembrane segment spans residues 121 to 141 (CLVGLGLGGGPVLASWYLEFI). 137 to 144 (YLEFIPAP) is an ATP binding site. Over 142–150 (PAPSRGTWM) the chain is Cytoplasmic. The chain crosses the membrane as a helical span at residues 151–171 (VVFSAFWTVGTIFEASLAWLV). Residues 172 to 174 (MPR) lie on the Extracellular side of the membrane. Residues 175–195 (LGWRWLLAFSSVPSSLLLLFY) form a helical membrane-spanning segment. The Cytoplasmic portion of the chain corresponds to 196–293 (RWTSESPRYL…ALLSPTLMKR (98 aa)). A helical transmembrane segment spans residues 294-314 (TLLLWVVFFGNAFAYYGVVLL). The Extracellular segment spans residues 315-341 (TTELNNSHNRCYPTEKQLRNSNDVNYR). Asparagine 319 is a glycosylation site (N-linked (GlcNAc...) asparagine). The chain crosses the membrane as a helical span at residues 342-362 (DVFIASFAEFPGLLISAAMVD). The Cytoplasmic portion of the chain corresponds to 363–367 (RLGRK). The chain crosses the membrane as a helical span at residues 368–387 (ASMASMLFTCCIFLLPLLSH). At 388–401 (QSPFITTVLLFGGR) the chain is on the extracellular side. A helical transmembrane segment spans residues 402–422 (ICISAAFTVVYIYAPEIYPTA). Over 423–429 (VRTTGVG) the chain is Cytoplasmic. A helical transmembrane segment spans residues 430–450 (VGSSVGRIGGILCPLVAVGLV). The Extracellular portion of the chain corresponds to 451-456 (HGCHQT). A helical membrane pass occupies residues 457-477 (IAVLLFEVVILVSGICVCLFP). Topologically, residues 478–500 (FETSGRDLTDSISASKEPPSASV) are cytoplasmic.

It belongs to the major facilitator (TC 2.A.1) superfamily. Organic cation transporter (TC 2.A.1.19) family. In terms of tissue distribution, expressed in pollen.

Its subcellular location is the membrane. Functionally, high affinity carnitine transporter involved in the active cellular uptake of carnitine. Also transports organic cations. The chain is Organic cation/carnitine transporter 7 (OCT7) from Arabidopsis thaliana (Mouse-ear cress).